We begin with the raw amino-acid sequence, 258 residues long: Phycoerythrobilin:ferredoxin oxidoreductase (258 aa).

The protein belongs to the HY2 family.

It catalyses the reaction (3Z)-phycoerythrobilin + oxidized 2[4Fe-4S]-[ferredoxin] = 15,16-dihydrobiliverdin + reduced 2[4Fe-4S]-[ferredoxin] + 2 H(+). Catalyzes the two-electron reduction of the C2 and C3(1) diene system of 15,16-dihydrobiliverdin. In Prochlorococcus marinus (strain NATL2A), this protein is Phycoerythrobilin:ferredoxin oxidoreductase.